Reading from the N-terminus, the 203-residue chain is uncharacterized protein (203 aa).

Fe cation is bound by residues His34, Glu97, and His172.

It belongs to the hemerythrin family.

The protein resides in the mitochondrion. This is an uncharacterized protein from Schizosaccharomyces pombe (strain 972 / ATCC 24843) (Fission yeast).